The chain runs to 999 residues: Sarcoplasmic/endoplasmic reticulum calcium ATPase 3 (999 aa).

Met1 bears the N-acetylmethionine mark. The Cytoplasmic portion of the chain corresponds to 1–48 (MEEAHLLSAADVLRRFSVTAEGGLTLEQVTDARERYGPNELPTEEGKS). Ser17 bears the Phosphoserine mark. At Thr19 the chain carries Phosphothreonine. A helical membrane pass occupies residues 49–69 (LWELVVEQFEDLLVRILLLAA). Residues 70–89 (LVSFVLAWFEEGEETTTAFV) are Lumenal-facing. Residues 90-110 (EPLVIMLILVANAIVGVWQER) form a helical membrane-spanning segment. Residues 111 to 253 (NAESAIEALK…PERTPLQRKL (143 aa)) are Cytoplasmic-facing. A helical transmembrane segment spans residues 254–273 (DEFGRQLSHAISVICVAVWV). At 274-295 (INIGHFADPAHGGSWLRGAVYY) the chain is on the lumenal side. A helical transmembrane segment spans residues 296–313 (FKIAVALAVAAIPEGLPA). Ca(2+) is bound by residues Val304, Ala305, Ile307, and Glu309. Topologically, residues 314 to 757 (VITTCLALGT…EEGRAIYNNM (444 aa)) are cytoplasmic. Residue Asp351 is the 4-aspartylphosphate intermediate of the active site. The Mg(2+) site is built by Asp351 and Thr353. Thr353 contributes to the ATP binding site. An interaction with phospholamban 1 region spans residues 370–400 (AEAEAGACRLHEFTISGTTYTPEGEVRQGEQ). Thr415 carries the post-translational modification Phosphothreonine. ATP is bound by residues Glu442, Arg489, Lys515, Arg560, Thr625, Gly626, and Asp627. Ser662 is subject to Phosphoserine. Residues Arg678 and Lys684 each contribute to the ATP site. Residue Asp703 coordinates Mg(2+). Asn706 contacts ATP. Residues 758–777 (KQFIRYLISSNVGEVVCIFL) form a helical membrane-spanning segment. Residues Asn768 and Glu771 each coordinate Ca(2+). Residues 778-787 (TAILGLPEAL) lie on the Lumenal side of the membrane. A helical transmembrane segment spans residues 788 to 808 (IPVQLLWVNLVTDGLPATALG). The segment at 788–808 (IPVQLLWVNLVTDGLPATALG) is interaction with phospholamban 2. Ca(2+) is bound by residues Asn796, Thr799, and Asp800. Topologically, residues 809–828 (FNPPDLDIMEKLPRNPREAL) are cytoplasmic. Residues 829–851 (ISGWLFFRYLAIGVYVGLATVAA) form a helical membrane-spanning segment. Topologically, residues 852–897 (ATWWFLYDAEGPQVTFHQLRNFLKCSEDNPLFAGIDCEVFESRFPT) are lumenal. The chain crosses the membrane as a helical span at residues 898–917 (TMALSVLVTIEMCNALNSVS). Ca(2+) is bound at residue Glu908. At 918–930 (ENQSLLRMPPWLN) the chain is on the cytoplasmic side. Residues 931–949 (PWLLGAVVMSMALHFLILL) form a helical membrane-spanning segment. The Lumenal portion of the chain corresponds to 950–964 (VPPLPLIFQVTPLSG). A helical membrane pass occupies residues 965–985 (RQWGVVLQMSLPVILLDEALK). Topologically, residues 986 to 999 (YLSRHHVDEKKDLK) are cytoplasmic.

It belongs to the cation transport ATPase (P-type) (TC 3.A.3) family. Type IIA subfamily. In terms of assembly, interacts with sarcolipin (SLN). Interacts with phospholamban (PLN). Interacts with myoregulin (MRLN). Interacts with DWORF. Interacts with VMP1. Interacts with TUNAR; the interaction occurs at low levels in low glucose conditions and is increased by high glucose levels. Mg(2+) is required as a cofactor. As to expression, found in most tissues. Most abundant in large and small intestine, spleen and lung. Also detected in PC12 cells.

The protein localises to the endoplasmic reticulum membrane. Its subcellular location is the sarcoplasmic reticulum membrane. The enzyme catalyses Ca(2+)(in) + ATP + H2O = Ca(2+)(out) + ADP + phosphate + H(+). With respect to regulation, inhibited by sarcolipin (SLN), phospholamban (PLN) and myoregulin (MRLN). Enhanced by DWORF; DWORF increases activity by displacing sarcolipin (SLN), phospholamban (PLN) and myoregulin (MRLN). This magnesium-dependent enzyme catalyzes the hydrolysis of ATP coupled with the transport of the calcium. Transports calcium ions from the cytosol into the sarcoplasmic/endoplasmic reticulum lumen. Contributes to calcium sequestration involved in muscular excitation/contraction. Its function is as follows. This magnesium-dependent enzyme catalyzes the hydrolysis of ATP coupled with the transport of calcium. Transports calcium ions from the cytosol into the sarcoplasmic/endoplasmic reticulum lumen. Contributes to calcium sequestration involved in muscular excitation/contraction. This Rattus norvegicus (Rat) protein is Sarcoplasmic/endoplasmic reticulum calcium ATPase 3 (Atp2a3).